We begin with the raw amino-acid sequence, 3298 residues long: Protocadherin-16 (3298 aa).

A signal peptide spans 1–42; it reads MQKELGIVPSCPGMKSPRPHLLLPLLLLLLLLLGAGVPGAWG. 27 Cadherin domains span residues 43-143, 144-255, 256-362, 367-472, 474-578, 579-685, 686-790, 791-894, 895-1000, 1001-1111, 1112-1211, 1218-1324, 1333-1436, 1437-1546, 1547-1649, 1650-1751, 1752-1855, 1856-1960, 1965-2068, 2069-2171, 2172-2277, 2278-2376, 2377-2482, 2483-2602, 2603-2706, 2707-2813, and 2814-2933; these read QAGS…APAF, PQAR…APAF, NQSR…QPSM, LSAD…APAF, RQLY…EPQF, QRTF…PPQF, YPRE…PPIF, EQLQ…SPAF, PAPE…APRF, NSPT…DPTF, LAVA…SPTF, AGGG…PPDL, VPVV…APAF, ARDP…APVF, ASPS…APTF, QQQE…APTF, GSAH…APAF, PVPA…APTF, LRLR…GPRF, PRAS…APRF, LRPH…RPTI, PQPW…APAF, SQSL…APSF, TLSH…PPVF, TRAS…GPAF, PLNL…DPVF, and LAPA…APDL. The Extracellular segment spans residues 43–2940; that stretch reads QAGSLDLQID…PDLNLLLVGA (2898 aa). Residues Asn-217, Asn-256, and Asn-402 are each glycosylated (N-linked (GlcNAc...) asparagine). A glycan (N-linked (GlcNAc...) asparagine) is linked at Asn-584. Asn-1249 carries an N-linked (GlcNAc...) asparagine glycan. An N-linked (GlcNAc...) asparagine glycan is attached at Asn-1521. Asn-1718 carries N-linked (GlcNAc...) asparagine glycosylation. Asn-1996 carries an N-linked (GlcNAc...) asparagine glycan. The interval 2065-2094 is disordered; it reads GPRFPRASSEATIRENAPPGTPIVSPRAVH. Residues Asn-2361, Asn-2428, and Asn-2569 are each glycosylated (N-linked (GlcNAc...) asparagine). Asn-2761, Asn-2792, and Asn-2862 each carry an N-linked (GlcNAc...) asparagine glycan. The helical transmembrane segment at 2941-2961 threads the bilayer; it reads VAASLGVVVVLALAALVLGLV. Residues 2962-3298 lie on the Cytoplasmic side of the membrane; sequence RARSRKAEAA…EPPDDTELHI (337 aa). The disordered stretch occupies residues 2986 to 3040; sequence LQKLGREPPSPPPSEHLYHQTLPSYGGPGAGGPYPRGGSLDPSHSSGRGSAEAAE. Residues 3011–3020 show a composition bias toward gly residues; it reads GGPGAGGPYP. Ser-3055 is modified (phosphoserine). Disordered stretches follow at residues 3062–3082 and 3233–3298; these read ARGP…TSCE and ASHR…ELHI. 2 stretches are compositionally biased toward low complexity: residues 3244–3266 and 3276–3289; these read SLSS…ARSP and GPSA…SGLE.

In terms of assembly, heterophilic interaction with FAT4; this interaction affects their respective protein levels. Expressed in fibroblasts but not in melanocytes or keratinocytes.

The protein localises to the cell membrane. In terms of biological role, calcium-dependent cell-adhesion protein. Mediates functions in neuroprogenitor cell proliferation and differentiation. In the heart, has a critical role for proper morphogenesis of the mitral valve, acting in the regulation of cell migration involved in valve formation. This is Protocadherin-16 (DCHS1) from Homo sapiens (Human).